A 401-amino-acid chain; its full sequence is Aspartokinase (401 aa).

This sequence belongs to the aspartokinase family.

The enzyme catalyses L-aspartate + ATP = 4-phospho-L-aspartate + ADP. The protein operates within amino-acid biosynthesis; L-lysine biosynthesis via DAP pathway; (S)-tetrahydrodipicolinate from L-aspartate: step 1/4. It participates in amino-acid biosynthesis; L-methionine biosynthesis via de novo pathway; L-homoserine from L-aspartate: step 1/3. It functions in the pathway amino-acid biosynthesis; L-threonine biosynthesis; L-threonine from L-aspartate: step 1/5. In Rickettsia felis (strain ATCC VR-1525 / URRWXCal2) (Rickettsia azadi), this protein is Aspartokinase (lysC).